Reading from the N-terminus, the 2340-residue chain is Protein pad-1 (2340 aa).

Disordered regions lie at residues 411–458 (KLIK…EPSI) and 1910–1959 (TRNS…RRDP). Residues 415-432 (KRPDSKPPRKPGDREGLH) show a composition bias toward basic and acidic residues. Positions 437 to 448 (SLHSGVSGNSED) are enriched in polar residues. A compositionally biased stretch (low complexity) spans 1922–1934 (GGSITSGSTSTTT).

Belongs to the DOP1 family.

Essential for cell patterning during gastrulation. May be involved in protein traffic between late Golgi and early endosomes. The polypeptide is Protein pad-1 (pad-1) (Caenorhabditis briggsae).